A 740-amino-acid chain; its full sequence is DNA ligase (740 aa).

A disordered region spans residues 1–20; that stretch reads MGPGLTLSGMTEQSSLFPAP. Residues 56 to 60, 105 to 106, and glutamate 142 contribute to the NAD(+) site; these read DAEYD and SI. Residue lysine 144 is the N6-AMP-lysine intermediate of the active site. 4 residues coordinate NAD(+): arginine 165, glutamate 201, lysine 322, and lysine 346. Zn(2+) is bound by residues cysteine 471, cysteine 474, cysteine 489, and cysteine 495. Positions 654–740 constitute a BRCT domain; it reads AATLPLAGMT…RGAPPNAGGG (87 aa).

It belongs to the NAD-dependent DNA ligase family. LigA subfamily. Requires Mg(2+) as cofactor. Mn(2+) is required as a cofactor.

It carries out the reaction NAD(+) + (deoxyribonucleotide)n-3'-hydroxyl + 5'-phospho-(deoxyribonucleotide)m = (deoxyribonucleotide)n+m + AMP + beta-nicotinamide D-nucleotide.. Its function is as follows. DNA ligase that catalyzes the formation of phosphodiester linkages between 5'-phosphoryl and 3'-hydroxyl groups in double-stranded DNA using NAD as a coenzyme and as the energy source for the reaction. It is essential for DNA replication and repair of damaged DNA. The sequence is that of DNA ligase from Acidovorax ebreus (strain TPSY) (Diaphorobacter sp. (strain TPSY)).